The sequence spans 703 residues: MEQSVDSLKVNHNDSEESKTDSQHLTYMDSSEPSFGQDGSPRVLPVTTPEEDGSLTSQNIPGPLTQAQILSAEQFHLVDQNGQPVQYELQSLGDSNAQMMIVASPSENGQVLRVIPSPQTGMTQVIIPQGPLVDENSPQDVSEEKPSDRNLPAVRVDALADSNSSYVLHPQASLTLPKKTVTRILEEPLLAPLQPLSSNTPIWACRLRSCEKIGDSYRGYCVSETELESVLTFHKQQTQSVWGTRQSPSPAKPATRLMWKSQYVPYDGIPFVNAGSRAVVMECQYGPRRKGFQLKKIGELENRSCQLYKATCPARIYIKKVQKFPDYRVPTDPKIDRKIIRMEQEKAFNLLKKNLVDAGGVLRWYVQLPTQQAHQYHELETPCLPLSSSSFPISSLEEEEAAIRDENCTLPSRLHPQVAHKIQELVSQGIEQVYAVRKQLRKFVERELFKPDEVPERHNLSFFPTVNDIRNHIHEVQKSLRNGDNICNSEIIPATLQWTTDSGNILRETVTVTLAEGNSQGESVSSKLETNQTRNSLSPEPAQLLSSLSSFQPKIFTHLQGLQLQPRFTSDGSPALISVNNHPSSSPSRLLDSVRSVVMNNNSLLLGQTHCLQTDTPLTPNSSISSTMSNLPGPDQNLVAVDQLVEVEDVEDTETLEGNVHRILLGNVQTIPIQIIDNPPVLSNFGSILKEPIFDCFGGPIKI.

Disordered regions lie at residues 1 to 61, 130 to 150, and 517 to 539; these read MEQS…QNIP, GPLV…SDRN, and GNSQ…SLSP. The span at 9-22 shows a compositional bias: basic and acidic residues; it reads KVNHNDSEESKTDS. Residues 23 to 34 show a composition bias toward polar residues; that stretch reads QHLTYMDSSEPS.

Its subcellular location is the nucleus. Functionally, acts as a transcriptional activator that mediates the calcium- and neuron-selective induction of BDNF exon III transcription. Binds to the consensus calcium-response element CaRE1 5'-CTATTTCGAG-3' sequence. This Bos taurus (Bovine) protein is Calcium-responsive transcription factor (CARF).